The sequence spans 331 residues: 4-hydroxythreonine-4-phosphate dehydrogenase (331 aa).

His136 and Thr137 together coordinate substrate. Positions 166, 211, and 266 each coordinate a divalent metal cation. The substrate site is built by Lys274, Asn283, and Arg292.

This sequence belongs to the PdxA family. In terms of assembly, homodimer. Requires Zn(2+) as cofactor. Mg(2+) is required as a cofactor. Co(2+) serves as cofactor.

The protein resides in the cytoplasm. The enzyme catalyses 4-(phosphooxy)-L-threonine + NAD(+) = 3-amino-2-oxopropyl phosphate + CO2 + NADH. Its pathway is cofactor biosynthesis; pyridoxine 5'-phosphate biosynthesis; pyridoxine 5'-phosphate from D-erythrose 4-phosphate: step 4/5. In terms of biological role, catalyzes the NAD(P)-dependent oxidation of 4-(phosphooxy)-L-threonine (HTP) into 2-amino-3-oxo-4-(phosphooxy)butyric acid which spontaneously decarboxylates to form 3-amino-2-oxopropyl phosphate (AHAP). In Thioalkalivibrio sulfidiphilus (strain HL-EbGR7), this protein is 4-hydroxythreonine-4-phosphate dehydrogenase.